Consider the following 619-residue polypeptide: MLLVRQLFGASANSWARALIIFVLAWIGLVYVFVVKLTNTQGQQAAGESELNARRISQALQMLEHTRQRNEELKQLIDELMSDQLDKQSAMKLVQRLENDALNPKLAPEVAGPEPESMFESAPADLRGWNNVAEGAPNDLEAGVPDHGEFEPSLEYEFTRRRIQTNIGEIWNFFSSELGKVRKAVAAGHASADLEESINQVLLQGAEHKRSLLSDMERMRQSDGYEAWRHKEARDLSDLVQRRLHHLQNPSDCQNARKLVCKLNKGCGYGCQLHHVVYCFIVAYATERTLILKSRGWRYHKGGWEEVFQPVSNSCHDAGTANTYNWPGKPNTQVLVLPIIDSLMPRPPYLPLAVPEDLAPRLKRLHGDPIVWWVGQFLKYLLRPQPTTRDFLTSGMRNLGWERPIVGVHVRRTDKVGTEAACHSVEEYMTYVEDYYRTLEVNGSTVARRIFLASDDAQVIEEARRKYPQYQIIGDPEVARMASVSTRYTDTALNGIILDIHLLSMSDHLVCTFSSQVCRVAYEIMQTMYPDAAHRFKSLDDIYYYGGQNAHNRRVVIAHKPRTHEDLQLRVGDLVSVAGNHWDGNSKGKNTRTNQGGLFPSFKVEEKVDTAKLPLYAGI.

Topologically, residues 1–17 (MLLVRQLFGASANSWAR) are cytoplasmic. A helical; Signal-anchor for type II membrane protein transmembrane segment spans residues 18–38 (ALIIFVLAWIGLVYVFVVKLT). Residues 39–619 (NTQGQQAAGE…TAKLPLYAGI (581 aa)) are Lumenal-facing. 3 cysteine pairs are disulfide-bonded: C253/C315, C261/C279, and C267/C271. In terms of domain architecture, GT23 spans 255–539 (NARKLVCKLN…PDAAHRFKSL (285 aa)). The short motif at 345 to 351 (PRPPYLP) is the SH3-binding element. Residues 411–412 (RR) are important for donor substrate binding. An intrachain disulfide couples C511 to C518. An SH3 domain is found at 548–609 (QNAHNRRVVI…PSFKVEEKVD (62 aa)).

It belongs to the glycosyltransferase 23 family. The cofactor is Mn(2+). Requires Mg(2+) as cofactor.

Its subcellular location is the golgi apparatus. The protein resides in the golgi stack membrane. It catalyses the reaction N(4)-{beta-D-GlcNAc-(1-&gt;2)-alpha-D-Man-(1-&gt;3)-[beta-D-GlcNAc-(1-&gt;2)-alpha-D-Man-(1-&gt;6)]-beta-D-Man-(1-&gt;4)-beta-D-GlcNAc-(1-&gt;4)-beta-D-GlcNAc}-L-asparaginyl-[protein] + GDP-beta-L-fucose = an N(4)-{beta-D-GlcNAc-(1-&gt;2)-alpha-D-Man-(1-&gt;3)-[beta-D-GlcNAc-(1-&gt;2)-alpha-D-Man-(1-&gt;6)]-beta-D-Man-(1-&gt;4)-beta-D-GlcNAc-(1-&gt;4)-[alpha-L-Fuc-(1-&gt;6)]-beta-D-GlcNAc}-L-asparaginyl-[protein] + GDP + H(+). It functions in the pathway protein modification; protein glycosylation. Its function is as follows. Catalyzes the addition of fucose in alpha 1-6 linkage to the first GlcNAc residue, next to the peptide chains in N-glycans. The addition is prevented if the GlcNAc residue is already fucosylated. This Drosophila melanogaster (Fruit fly) protein is Alpha-(1,6)-fucosyltransferase (FucT6).